The primary structure comprises 246 residues: 14-3-3 protein beta/alpha (246 aa).

At M1 the chain carries N-acetylmethionine. Residue T2 is modified to N-acetylthreonine; in 14-3-3 protein beta/alpha, N-terminally processed. T2 carries the post-translational modification Phosphothreonine. K5 carries the N6-acetyllysine modification. The residue at position 51 (K51) is an N6-acetyllysine; alternate. A Glycyl lysine isopeptide (Lys-Gly) (interchain with G-Cter in SUMO2); alternate cross-link involves residue K51. At S60 the chain carries Phosphoserine. K70 is modified (N6-acetyllysine). A 3'-nitrotyrosine mark is found at Y84 and Y106. An N6-acetyllysine modification is found at K117. Residues S186 and S232 each carry the phosphoserine modification.

This sequence belongs to the 14-3-3 family. As to quaternary structure, homodimer. Interacts with SAMSN1 and PRKCE. Interacts with AKAP13. Interacts with SSH1 and TORC2/CRTC2. Interacts with ABL1; the interaction results in cytoplasmic location of ABL1 and inhibition of cABL-mediated apoptosis. Interacts with ROR2 (dimer); the interaction results in phosphorylation of YWHAB on tyrosine residues. Interacts with GAB2. Interacts with YAP1 (phosphorylated form). Interacts with the phosphorylated (by AKT1) form of SRPK2. Interacts with PKA-phosphorylated AANAT. Interacts with MYO1C. Interacts with SIRT2. Interacts with the 'Thr-369' phosphorylated form of DAPK2. Interacts with PI4KB, TBC1D22A and TBC1D22B. Interacts with the 'Ser-1134' and 'Ser-1161' phosphorylated form of SOS1. Interacts (via phosphorylated form) with YWHAB; this interaction occurs in a protein kinase AKT1-dependent manner. Interacts with SLITRK1. Interacts with SYNPO2 (phosphorylated form); YWHAB competes with ACTN2 for interaction with SYNPO2. Interacts with RIPOR2 (via phosphorylated form); this interaction occurs in a chemokine-dependent manner and does not compete for binding of RIPOR2 with RHOA nor blocks inhibition of RIPOR2-mediated RHOA activity. Interacts with MARK2 and MARK3. Interacts with TESK1; the interaction is dependent on the phosphorylation of TESK1 'Ser-439' and inhibits TESK1 kinase activity. Interacts with MEFV. Interacts with HDAC4. Interacts with ADAM22 (via C-terminus). The alpha, brain-specific form differs from the beta form in being phosphorylated. Phosphorylated on Ser-60 by protein kinase C delta type catalytic subunit in a sphingosine-dependent fashion.

It is found in the cytoplasm. Its subcellular location is the melanosome. Its function is as follows. Adapter protein implicated in the regulation of a large spectrum of both general and specialized signaling pathways. Binds to a large number of partners, usually by recognition of a phosphoserine or phosphothreonine motif. Binding generally results in the modulation of the activity of the binding partner. Negative regulator of osteogenesis. Blocks the nuclear translocation of the phosphorylated form (by AKT1) of SRPK2 and antagonizes its stimulatory effect on cyclin D1 expression resulting in blockage of neuronal apoptosis elicited by SRPK2. Negative regulator of signaling cascades that mediate activation of MAP kinases via AKAP13. The protein is 14-3-3 protein beta/alpha (YWHAB) of Bos taurus (Bovine).